The primary structure comprises 384 residues: S-adenosylmethionine synthase (384 aa).

His-15 serves as a coordination point for ATP. Asp-17 lines the Mg(2+) pocket. Glu-43 is a K(+) binding site. Glu-56 and Gln-99 together coordinate L-methionine. The interval Gln-99 to Lys-109 is flexible loop. ATP contacts are provided by residues Asp-164–Lys-166, Arg-230–Phe-231, Asp-239, Arg-245–Lys-246, Ala-262, and Lys-266. Position 239 (Asp-239) interacts with L-methionine. Lys-270 contacts L-methionine.

It belongs to the AdoMet synthase family. As to quaternary structure, homotetramer; dimer of dimers. Requires Mg(2+) as cofactor. The cofactor is K(+).

The protein localises to the cytoplasm. The catalysed reaction is L-methionine + ATP + H2O = S-adenosyl-L-methionine + phosphate + diphosphate. It participates in amino-acid biosynthesis; S-adenosyl-L-methionine biosynthesis; S-adenosyl-L-methionine from L-methionine: step 1/1. Its function is as follows. Catalyzes the formation of S-adenosylmethionine (AdoMet) from methionine and ATP. The overall synthetic reaction is composed of two sequential steps, AdoMet formation and the subsequent tripolyphosphate hydrolysis which occurs prior to release of AdoMet from the enzyme. The sequence is that of S-adenosylmethionine synthase from Vibrio parahaemolyticus serotype O3:K6 (strain RIMD 2210633).